Reading from the N-terminus, the 545-residue chain is Tripartite motif-containing protein 26 (545 aa).

The RING-type zinc-finger motif lies at 16-57 (CSICLDYLRDPVTIDCGHVFCRSCTSDIRPISGNRPVCPLCK). The B box-type zinc finger occupies 97 to 138 (QDMKLCERHQEKLHYYCEDDGKLLCVMCRESREHRPHTAVLV). 4 residues coordinate Zn(2+): cysteine 102, histidine 105, cysteine 124, and histidine 130. Residues 197-243 (QFLKKREQHLLDQLATLEQLLTEGREKFKTRGVSELDRLTLVISELE) adopt a coiled-coil conformation. The B30.2/SPRY domain maps to 301–545 (RGLRQFQGKL…WPGARLLLRP (245 aa)). Positions 382-443 (REGWSEDEEE…EEEEEVQESC (62 aa)) are disordered. Positions 386-440 (SEDEEEGEEEEEGEEEEEDEEVGYGDGYEDWETDEEDESLGEEEEEEEEEEEEVQ) are enriched in acidic residues.

It belongs to the TRIM/RBCC family. In terms of assembly, interacts with TBK1; this interaction bridges together TBK1 and NEMO in order to activate TBK1. Interacts with INCA1. Autoubiquitinates upon viral infection. In turn, autoubiquitinated TRIM26 recruits NEMO and bridges TBK1-NEMO interaction.

Its subcellular location is the cytoplasm. The protein resides in the nucleus. It catalyses the reaction S-ubiquitinyl-[E2 ubiquitin-conjugating enzyme]-L-cysteine + [acceptor protein]-L-lysine = [E2 ubiquitin-conjugating enzyme]-L-cysteine + N(6)-ubiquitinyl-[acceptor protein]-L-lysine.. Its function is as follows. E3 ubiquitin-protein ligase which regulates the IFN-beta production and antiviral response downstream of various DNA-encoded pattern-recognition receptors (PRRs). Also plays a central role in determining the response to different forms of oxidative stress by controlling levels of DNA glycosylases NEIL1, NEIL3 and NTH1 that are involved in repair of damaged DNA. Promotes nuclear IRF3 ubiquitination and proteasomal degradation. Bridges together TBK1 and NEMO during the innate response to viral infection leading to the activation of TBK1. Positively regulates LPS-mediated inflammatory innate immune response by catalyzing the 'Lys-11'-linked polyubiquitination of TAB1 to enhance its activation and subsequent NF-kappa-B and MAPK signaling. In a manner independent of its catalytic activity, inhibits WWP2, a SOX2-directed E3 ubiquitin ligase, and thus protects SOX2 from polyubiquitination and proteasomal degradation. Ubiquitinates the histone acetyltransferase protein complex component PHF20 and thereby triggers its degradation in the nucleus after its recruitment by the histone demethylase KDM6B, serving as a scaffold protein. Upon induction by TGF-beta, ubiquitinates the TFIID component TAF7 for proteasomal degradation. Induces ferroptosis by ubiquitinating SLC7A11, a critical protein for lipid reactive oxygen species (ROS) scavenging. This chain is Tripartite motif-containing protein 26 (Trim26), found in Mus musculus (Mouse).